The primary structure comprises 259 residues: Deoxyribose-phosphate aldolase (259 aa).

Residue Asp102 is the Proton donor/acceptor of the active site. Lys167 serves as the catalytic Schiff-base intermediate with acetaldehyde. Lys201 functions as the Proton donor/acceptor in the catalytic mechanism.

It belongs to the DeoC/FbaB aldolase family. DeoC type 2 subfamily.

The protein resides in the cytoplasm. The enzyme catalyses 2-deoxy-D-ribose 5-phosphate = D-glyceraldehyde 3-phosphate + acetaldehyde. Its pathway is carbohydrate degradation; 2-deoxy-D-ribose 1-phosphate degradation; D-glyceraldehyde 3-phosphate and acetaldehyde from 2-deoxy-alpha-D-ribose 1-phosphate: step 2/2. In terms of biological role, catalyzes a reversible aldol reaction between acetaldehyde and D-glyceraldehyde 3-phosphate to generate 2-deoxy-D-ribose 5-phosphate. This Escherichia fergusonii (strain ATCC 35469 / DSM 13698 / CCUG 18766 / IAM 14443 / JCM 21226 / LMG 7866 / NBRC 102419 / NCTC 12128 / CDC 0568-73) protein is Deoxyribose-phosphate aldolase.